A 134-amino-acid chain; its full sequence is Loki profilin-2 (134 aa).

Residues Leu55–Ile62 form a loki loop region.

Belongs to the Asgard profilin family.

The protein localises to the cytoplasm. The protein resides in the cytoskeleton. With respect to regulation, inhibition of rabbit actin polymerization is reduced by phosphatidylinositol-(4,5)-P2(1,2-dipalmitoyl), a soluble form of the phospholipid phosphatidylinositol, suggesting an unknown lipid might regulate actin-profilin interaction in vivo. In terms of biological role, binds to actin and affects the structure of the cytoskeleton. At high concentrations inhibits spontaneous rabbit actin nucleation. This strongly suggests this archaea has a profilin-regulated actin system, and actin-type genes can be identified in this organism. This is Loki profilin-2 from Lokiarchaeum sp. (strain GC14_75).